A 399-amino-acid polypeptide reads, in one-letter code: Acetate kinase (399 aa).

Asparagine 9 contributes to the Mg(2+) binding site. ATP is bound at residue lysine 16. Residue arginine 90 coordinates substrate. Aspartate 147 functions as the Proton donor/acceptor in the catalytic mechanism. Residues histidine 207–glycine 211, aspartate 281–arginine 283, and glycine 333–asparagine 337 contribute to the ATP site. Glutamate 387 contacts Mg(2+).

The protein belongs to the acetokinase family. As to quaternary structure, homodimer. The cofactor is Mg(2+). Mn(2+) serves as cofactor.

The protein localises to the cytoplasm. It catalyses the reaction acetate + ATP = acetyl phosphate + ADP. It functions in the pathway metabolic intermediate biosynthesis; acetyl-CoA biosynthesis; acetyl-CoA from acetate: step 1/2. Functionally, catalyzes the formation of acetyl phosphate from acetate and ATP. Can also catalyze the reverse reaction. The polypeptide is Acetate kinase (Mycobacterium sp. (strain JLS)).